The sequence spans 439 residues: FAD-linked oxidoreductase phmC (439 aa).

Positions 1 to 19 are cleaved as a signal peptide; the sequence is MLSSILLTIFCAFLSSTGA. 2 N-linked (GlcNAc...) asparagine glycosylation sites follow: N29 and N84. The 184-residue stretch at 89-272 folds into the FAD-binding PCMH-type domain; that stretch reads QGSVPSYYIQ…LSTTTRVEPK (184 aa). N-linked (GlcNAc...) asparagine glycans are attached at residues N285 and N300.

Belongs to the oxygen-dependent FAD-linked oxidoreductase family. Requires FAD as cofactor.

The protein operates within mycotoxin biosynthesis. Its function is as follows. FAD-linked oxidoreductase; part of the gene cluster that mediates the biosynthesis of the mycotoxins phomacins, leucine-derived cytochalasans with potent actin polymerization-inhibitory activities and monocot-specific antigerminative activities. The first step in the pathway is catalyzed by the hybrid PKS-NRPS phmA, assisted by the enoyl reductase phmE, that are responsible for fusion of the leucine precursor and the polyketide backbone to produce a 2-pyrrolidone intermediate. The polyketide synthase module (PKS) of phmA is responsible for the synthesis of the polyketide backbone and the downstream nonribosomal peptide synthetase (NRPS) amidates the carboxyl end of the polyketide with the leucine precursor. Because phmA lacks a designated enoylreductase (ER) domain, the required activity is provided the enoyl reductase phmE. Reduction by the hydrolyase phmG, followed by dehydration and intra-molecular Diels-Alder cyclization by the Diels-Alderase phmD then yield the required isoindolone-fused macrocycle. A number of oxidative steps catalyzed by the tailoring cytochrome P450 monooxygenase phmB, the FAD-linked oxidoreductase phmC and the short-chain dehydrogenase/reductase phmF, are further required to afford the final products, phomacin D and phomacin E. This chain is FAD-linked oxidoreductase phmC, found in Phaeosphaeria nodorum (strain SN15 / ATCC MYA-4574 / FGSC 10173) (Glume blotch fungus).